The chain runs to 489 residues: Netrin-5 (489 aa).

Residues 1–16 (MPVTFALLLLLGQATA) form the signal peptide. N-linked (GlcNAc...) asparagine glycosylation occurs at N62. Cystine bridges form between C157–C166, C159–C175, C177–C186, C189–C209, C212–C221, C214–C239, C242–C251, C254–C272, C275–C287, C277–C294, C296–C305, C308–C322, C345–C418, C349–C420, and C364–C475. Laminin EGF-like domains lie at 157-211 (CQCH…PCLP), 212-274 (CSCN…ACRA), and 275-324 (CQCH…PCQR). The NTR domain maps to 345–475 (CQNYCNMSDT…LQQEERAGGC (131 aa)). Positions 470-489 (ERAGGCRGVRAPTPSPRPEH) are disordered.

The protein localises to the secreted. Plays a role in neurogenesis. Prevents motor neuron cell body migration out of the neural tube. This chain is Netrin-5 (NTN5), found in Homo sapiens (Human).